The primary structure comprises 400 residues: D(3) dopamine receptor (400 aa).

Residues 1–32 (MAPLSQLSGHLNYTCGVENSTGASQARPHAYY) lie on the Extracellular side of the membrane. Residues N12 and N19 are each glycosylated (N-linked (GlcNAc...) asparagine). The helical transmembrane segment at 33-55 (ALSYCALILAIVFGNGLVCMAVL) threads the bilayer. The Cytoplasmic segment spans residues 56 to 65 (KERALQTTTN). Residues 66-88 (YLVVSLAVADLLVATLVMPWVVY) traverse the membrane as a helical segment. At 89 to 104 (LEVTGGVWNFSRVCCD) the chain is on the extracellular side. Residue N97 is glycosylated (N-linked (GlcNAc...) asparagine). The cysteines at positions 103 and 181 are disulfide-linked. A helical membrane pass occupies residues 105 to 126 (VFVTLDVMMCTASILNLCAISI). Topologically, residues 127–149 (DRYTAVVMPVHYQHGTGQSSCRR) are cytoplasmic. The chain crosses the membrane as a helical span at residues 150 to 170 (VTLMITAVWVLAFAVSCPLLF). At 171 to 187 (GFNTTGDPTVCSISNPD) the chain is on the extracellular side. N-linked (GlcNAc...) asparagine glycosylation is present at N173. A helical transmembrane segment spans residues 188-209 (FVIYSSVVSFYLPFGVTVLVYA). Residues 210–329 (RIYVVLKQRR…VPLREKKATQ (120 aa)) lie on the Cytoplasmic side of the membrane. A helical membrane pass occupies residues 330 to 351 (MVAIVLGAFIVCWLPFFLTHVL). Over 352–366 (NTHCQTCHVSPELYS) the chain is Extracellular. C355 and C358 are disulfide-bonded. Residues 367–386 (ATTWLGYVNSALNPVIYTTF) traverse the membrane as a helical segment. The Cytoplasmic segment spans residues 387–400 (NIEFRKAFLKILSC).

Belongs to the G-protein coupled receptor 1 family. As to quaternary structure, interacts with CLIC6. Interacts with GRK4. Interacts with PALM. Interacts with FLNA (via filamin repeat 21); increases PKA-mediated phosphorylation of FLNA. Phosphorylated by GRK4. In terms of processing, palmitoylated.

The protein localises to the cell membrane. Functionally, dopamine receptor whose activity is mediated by G proteins which inhibit adenylyl cyclase. Promotes cell proliferation. The chain is D(3) dopamine receptor (DRD3) from Chlorocebus aethiops (Green monkey).